The following is a 269-amino-acid chain: Cell cycle regulator CcrZ (269 aa).

ATP is bound by residues Phe-39, His-76, Trp-77, Met-78, and Gly-80. A Brenner's motif [HXDhX3N] motif is present at residues 164 to 171 (HCDVNHNN). Asp-166 functions as the Proton acceptor in the catalytic mechanism. The short motif at 180 to 203 (LYLIDWDGAMIADPAMDLGPLLYH) is the APH element.

Belongs to the aminoglycoside phosphotransferase family. As to quaternary structure, monomer in solution. Interacts with DnaA (via domains I (1-82) and III (111-326)). Interacts with DnaB. Interacts with FtsZ.

The protein resides in the cytoplasm. The enzyme catalyses D-ribose + ATP = D-ribose 5-phosphate + ADP + H(+). The catalysed reaction is 2-deoxy-D-ribose + ATP = 2-deoxy-D-ribose 5-phosphate + ADP + H(+). Activated by D-ribose and 2-deoxy-D-ribose. Slightly activated by kanamycin and gentamicin. In terms of biological role, plays a role in cell cycle regulation and chromosome integrity. Activates DnaA-dependent chromosomal DNA replication initiation ensuring that the chromosome is replicated at the right time during the cell cycle. May regulate replication initiation through phosphorylation of a possible second messenger or metabolite, and by interacting with replication initiation proteins. Has ATPase activity with D-ribose and 2-deoxy-D-ribose in vitro, but not with choline. Involved in DNA damage response. This Bacillus subtilis (strain 168) protein is Cell cycle regulator CcrZ.